Consider the following 698-residue polypeptide: Zinc finger CCCH domain-containing protein 7 (698 aa).

Positions 1–11 (MEEPSPVPPAA) are enriched in pro residues. Disordered regions lie at residues 1 to 23 (MEEP…PPTT), 56 to 95 (HAAR…GGDR), 109 to 137 (APHE…PQGT), and 272 to 300 (GSLD…SGNS). 2 stretches are compositionally biased toward low complexity: residues 12 to 21 (APASLAAAPP) and 65 to 74 (EPAAAAAIPP). Residues 281-300 (EEGEIEGDTQNLDADDSGNS) show a composition bias toward acidic residues. 3 consecutive C3H1-type zinc fingers follow at residues 429–456 (PKVV…HDTT), 458–485 (LTKS…HELS), and 486–511 (KYPC…HVIP). 2 disordered regions span residues 512–553 (TAEG…GEPA) and 607–682 (TEKH…QHEV). 2 stretches are compositionally biased toward polar residues: residues 535–548 (CQEQ…STVY) and 665–680 (SLPT…STQH).

The protein is Zinc finger CCCH domain-containing protein 7 of Oryza sativa subsp. japonica (Rice).